The chain runs to 914 residues: Protein translocase subunit SecA (914 aa).

Residues Gln87, 105–109, and Asp508 each bind ATP; that span reads GEGKT. Cys898, Cys900, Cys909, and His910 together coordinate Zn(2+).

Belongs to the SecA family. Monomer and homodimer. Part of the essential Sec protein translocation apparatus which comprises SecA, SecYEG and auxiliary proteins SecDF-YajC and YidC. The cofactor is Zn(2+).

It localises to the cell inner membrane. The protein localises to the cytoplasm. The enzyme catalyses ATP + H2O + cellular proteinSide 1 = ADP + phosphate + cellular proteinSide 2.. Functionally, part of the Sec protein translocase complex. Interacts with the SecYEG preprotein conducting channel. Has a central role in coupling the hydrolysis of ATP to the transfer of proteins into and across the cell membrane, serving both as a receptor for the preprotein-SecB complex and as an ATP-driven molecular motor driving the stepwise translocation of polypeptide chains across the membrane. In Xylella fastidiosa (strain M23), this protein is Protein translocase subunit SecA.